A 237-amino-acid polypeptide reads, in one-letter code: Peptidase E (237 aa).

Active-site charge relay system residues include S122, D137, and H159.

It belongs to the peptidase S51 family.

Its subcellular location is the cytoplasm. The enzyme catalyses Dipeptidase E catalyzes the hydrolysis of dipeptides Asp-|-Xaa. It does not act on peptides with N-terminal Glu, Asn or Gln, nor does it cleave isoaspartyl peptides.. Functionally, hydrolyzes dipeptides containing N-terminal aspartate residues. May play a role in allowing the cell to use peptide aspartate to spare carbon otherwise required for the synthesis of the aspartate family of amino acids. The polypeptide is Peptidase E (Shewanella baltica (strain OS155 / ATCC BAA-1091)).